The following is a 259-amino-acid chain: 2-oxoglutaramate amidase (259 aa).

The 236-residue stretch at 3–238 (WTISCLQFDI…EGIVRAEIDL (236 aa)) folds into the CN hydrolase domain. E42 serves as the catalytic Proton acceptor. K111 (proton donor) is an active-site residue. Catalysis depends on C145, which acts as the Nucleophile.

Belongs to the carbon-nitrogen hydrolase superfamily. NIT1/NIT2 family.

The catalysed reaction is 2-oxoglutaramate + H2O = 2-oxoglutarate + NH4(+). Functionally, involved in the methylthioribose (MTR) recycling pathway. Probably catalyzes the conversion of 2-oxoglutaramate to 2-oxoglutarate. This chain is 2-oxoglutaramate amidase, found in Bacillus subtilis (strain 168).